A 385-amino-acid chain; its full sequence is Spermidine/putrescine import ATP-binding protein PotA (385 aa).

The ABC transporter domain occupies 27–257; it reads ASFRAVSKHY…PANLFVAQFA (231 aa). 59–66 is an ATP binding site; that stretch reads GPSGCGKT.

The protein belongs to the ABC transporter superfamily. Spermidine/putrescine importer (TC 3.A.1.11.1) family. In terms of assembly, the complex is composed of two ATP-binding proteins (PotA), two transmembrane proteins (PotB and PotC) and a solute-binding protein (PotD).

It is found in the cell inner membrane. It catalyses the reaction ATP + H2O + polyamine-[polyamine-binding protein]Side 1 = ADP + phosphate + polyamineSide 2 + [polyamine-binding protein]Side 1.. Part of the ABC transporter complex PotABCD involved in spermidine/putrescine import. Responsible for energy coupling to the transport system. The protein is Spermidine/putrescine import ATP-binding protein PotA of Methylococcus capsulatus (strain ATCC 33009 / NCIMB 11132 / Bath).